We begin with the raw amino-acid sequence, 261 residues long: 5'-nucleotidase SurE (261 aa).

The a divalent metal cation site is built by Asp8, Asp9, Ser43, and Asn96.

This sequence belongs to the SurE nucleotidase family. A divalent metal cation serves as cofactor.

The protein localises to the cytoplasm. The catalysed reaction is a ribonucleoside 5'-phosphate + H2O = a ribonucleoside + phosphate. Functionally, nucleotidase that shows phosphatase activity on nucleoside 5'-monophosphates. This is 5'-nucleotidase SurE from Cereibacter sphaeroides (strain ATCC 17023 / DSM 158 / JCM 6121 / CCUG 31486 / LMG 2827 / NBRC 12203 / NCIMB 8253 / ATH 2.4.1.) (Rhodobacter sphaeroides).